The following is a 260-amino-acid chain: ATP synthase subunit a (260 aa).

The next 6 helical transmembrane spans lie at 37 to 57 (FTNA…FMTL), 95 to 115 (FFPF…IGMF), 125 to 145 (IVVT…TGFV), 154 to 174 (VFVP…IEII), 191 to 211 (MLAG…FMTM), and 233 to 253 (EFLV…MYLH).

It belongs to the ATPase A chain family. In terms of assembly, F-type ATPases have 2 components, CF(1) - the catalytic core - and CF(0) - the membrane proton channel. CF(1) has five subunits: alpha(3), beta(3), gamma(1), delta(1), epsilon(1). CF(0) has three main subunits: a(1), b(2) and c(9-12). The alpha and beta chains form an alternating ring which encloses part of the gamma chain. CF(1) is attached to CF(0) by a central stalk formed by the gamma and epsilon chains, while a peripheral stalk is formed by the delta and b chains.

It localises to the cell inner membrane. Key component of the proton channel; it plays a direct role in the translocation of protons across the membrane. The sequence is that of ATP synthase subunit a from Parvibaculum lavamentivorans (strain DS-1 / DSM 13023 / NCIMB 13966).